We begin with the raw amino-acid sequence, 85 residues long: Small ribosomal subunit protein bS16 (85 aa).

The protein belongs to the bacterial ribosomal protein bS16 family.

The sequence is that of Small ribosomal subunit protein bS16 from Pseudomonas syringae pv. tomato (strain ATCC BAA-871 / DC3000).